The chain runs to 375 residues: 23S rRNA (uracil(747)-C(5))-methyltransferase RlmC (375 aa).

The [4Fe-4S] cluster site is built by Cys-3, Cys-11, Cys-14, and Cys-87. S-adenosyl-L-methionine is bound by residues Gln-212, Phe-241, Glu-262, and Asn-307. Cys-334 (nucleophile) is an active-site residue.

It belongs to the class I-like SAM-binding methyltransferase superfamily. RNA M5U methyltransferase family. RlmC subfamily.

The catalysed reaction is uridine(747) in 23S rRNA + S-adenosyl-L-methionine = 5-methyluridine(747) in 23S rRNA + S-adenosyl-L-homocysteine + H(+). In terms of biological role, catalyzes the formation of 5-methyl-uridine at position 747 (m5U747) in 23S rRNA. In Salmonella enteritidis PT4 (strain P125109), this protein is 23S rRNA (uracil(747)-C(5))-methyltransferase RlmC.